Consider the following 4655-residue polypeptide: MDRGPAAVACTLLLALVACLAPASGQECDSAHFRCGSGHCIPADWRCDGTKDCSDDADEIGCAVVTCQQGYFKCQSEGQCIPNSWVCDQDQDCDDGSDERQDCSQSTCSSHQITCSNGQCIPSEYRCDHVRDCPDGADENDCQYPTCEQLTCDNGACYNTSQKCDWKVDCRDSSDEINCTEICLHNEFSCGNGECIPRAYVCDHDNDCQDGSDEHACNYPTCGGYQFTCPSGRCIYQNWVCDGEDDCKDNGDEDGCESGPHDVHKCSPREWSCPESGRCISIYKVCDGILDCPGREDENNTSTGKYCSMTLCSALNCQYQCHETPYGGACFCPPGYIINHNDSRTCVEFDDCQIWGICDQKCESRPGRHLCHCEEGYILERGQYCKANDSFGEASIIFSNGRDLLIGDIHGRSFRILVESQNRGVAVGVAFHYHLQRVFWTDTVQNKVFSVDINGLNIQEVLNVSVETPENLAVDWVNNKIYLVETKVNRIDMVNLDGSYRVTLITENLGHPRGIAVDPTVGYLFFSDWESLSGEPKLERAFMDGSNRKDLVKTKLGWPAGVTLDMISKRVYWVDSRFDYIETVTYDGIQRKTVVHGGSLIPHPFGVSLFEGQVFFTDWTKMAVLKANKFTETNPQVYYQASLRPYGVTVYHSLRQPYATNPCKDNNGGCEQVCVLSHRTDNDGLGFRCKCTFGFQLDTDERHCIAVQNFLIFSSQVAIRGIPFTLSTQEDVMVPVSGNPSFFVGIDFDAQDSTIFFSDMSKHMIFKQKIDGTGREILAANRVENVESLAFDWISKNLYWTDSHYKSISVMRLADKTRRTVVQYLNNPRSVVVHPFAGYLFFTDWFRPAKIMRAWSDGSHLLPVINTTLGWPNGLAIDWAASRLYWVDAYFDKIEHSTFDGLDRRRLGHIEQMTHPFGLAIFGEHLFFTDWRLGAIIRVRKADGGEMTVIRSGIAYILHLKSYDVNIQTGSNACNQPTHPNGDCSHFCFPVPNFQRVCGCPYGMRLASNHLTCEGDPTNEPPTEQCGLFSFPCKNGRCVPNYYLCDGVDDCHDNSDEQLCGTLNNTCSSSAFTCGHGECIPAHWRCDKRNDCVDGSDEHNCPTHAPASCLDTQYTCDNHQCISKNWVCDTDNDCGDGSDEKNCNSTETCQPSQFNCPNHRCIDLSFVCDGDKDCVDGSDEVGCVLNCTASQFKCASGDKCIGVTNRCDGVFDCSDNSDEAGCPTRPPGMCHSDEFQCQEDGICIPNFWECDGHPDCLYGSDEHNACVPKTCPSSYFHCDNGNCIHRAWLCDRDNDCGDMSDEKDCPTQPFRCPSWQWQCLGHNICVNLSVVCDGIFDCPNGTDESPLCNGNSCSDFNGGCTHECVQEPFGAKCLCPLGFLLANDSKTCEDIDECDILGSCSQHCYNMRGSFRCSCDTGYMLESDGRTCKVTASESLLLLVASQNKIIADSVTSQVHNIYSLVENGSYIVAVDFDSISGRIFWSDATQGKTWSAFQNGTDRRVVFDSSIILTETIAIDWVGRNLYWTDYALETIEVSKIDGSHRTVLISKNLTNPRGLALDPRMNEHLLFWSDWGHHPRIERASMDGSMRTVIVQDKIFWPCGLTIDYPNRLLYFMDSYLDYMDFCDYNGHHRRQVIASDLIIRHPYALTLFEDSVYWTDRATRRVMRANKWHGGNQSVVMYNIQWPLGIVAVHPSKQPNSVNPCAFSRCSHLCLLSSQGPHFYSCVCPSGWSLSPDLLNCLRDDQPFLITVRQHIIFGISLNPEVKSNDAMVPIAGIQNGLDVEFDDAEQYIYWVENPGEIHRVKTDGTNRTVFASISMVGPSMNLALDWISRNLYSTNPRTQSIEVLTLHGDIRYRKTLIANDGTALGVGFPIGITVDPARGKLYWSDQGTDSGVPAKIASANMDGTSVKTLFTGNLEHLECVTLDIEEQKLYWAVTGRGVIERGNVDGTDRMILVHQLSHPWGIAVHDSFLYYTDEQYEVIERVDKATGANKIVLRDNVPNLRGLQVYHRRNAAESSNGCSNNMNACQQICLPVPGGLFSCACATGFKLNPDNRSCSPYNSFIVVSMLSAIRGFSLELSDHSETMVPVAGQGRNALHVDVDVSSGFIYWCDFSSSVASDNAIRRIKPDGSSLMNIVTHGIGENGVRGIAVDWVAGNLYFTNAFVSETLIEVLRINTTYRRVLLKVTVDMPRHIVVDPKNRYLFWADYGQRPKIERSFLDCTNRTVLVSEGIVTPRGLAVDRSDGYVYWVDDSLDIIARIRINGENSEVIRYGSRYPTPYGITVFENSIIWVDRNLKKIFQASKEPENTEPPTVIRDNINWLRDVTIFDKQVQPRSPAEVNNNPCLENNGGCSHLCFALPGLHTPKCDCAFGTLQSDGKNCAISTENFLIFALSNSLRSLHLDPENHSPPFQTINVERTVMSLDYDSVSDRIYFTQNLASGVGQISYATLSSGIHTPTVIASGIGTADGIAFDWITRRIYYSDYLNQMINSMAEDGSNRTVIARVPKPRAIVLDPCQGYLYWADWDTHAKIERATLGGNFRVPIVNSSLVMPSGLTLDYEEDLLYWVDASLQRIERSTLTGVDREVIVNAAVHAFGLTLYGQYIYWTDLYTQRIYRANKYDGSGQIAMTTNLLSQPRGINTVVKNQKQQCNNPCEQFNGGCSHICAPGPNGAECQCPHEGNWYLANNRKHCIVDNGERCGASSFTCSNGRCISEEWKCDNDNDCGDGSDEMESVCALHTCSPTAFTCANGRCVQYSYRCDYYNDCGDGSDEAGCLFRDCNATTEFMCNNRRCIPREFICNGVDNCHDNNTSDEKNCPDRTCQSGYTKCHNSNICIPRVYLCDGDNDCGDNSDENPTYCTTHTCSSSEFQCASGRCIPQHWYCDQETDCFDASDEPASCGHSERTCLADEFKCDGGRCIPSEWICDGDNDCGDMSDEDKRHQCQNQNCSDSEFLCVNDRPPDRRCIPQSWVCDGDVDCTDGYDENQNCTRRTCSENEFTCGYGLCIPKIFRCDRHNDCGDYSDERGCLYQTCQQNQFTCQNGRCISKTFVCDEDNDCGDGSDELMHLCHTPEPTCPPHEFKCDNGRCIEMMKLCNHLDDCLDNSDEKGCGINECHDPSISGCDHNCTDTLTSFYCSCRPGYKLMSDKRTCVDIDECTEMPFVCSQKCENVIGSYICKCAPGYLREPDGKTCRQNSNIEPYLIFSNRYYLRNLTIDGYFYSLILEGLDNVVALDFDRVEKRLYWIDTQRQVIERMFLNKTNKETIINHRLPAAESLAVDWVSRKLYWLDARLDGLFVSDLNGGHRRMLAQHCVDANNTFCFDNPRGLALHPQYGYLYWADWGHRAYIGRVGMDGTNKSVIISTKLEWPNGITIDYTNDLLYWADAHLGYIEYSDLEGHHRHTVYDGALPHPFAITIFEDTIYWTDWNTRTVEKGNKYDGSNRQTLVNTTHRPFDIHVYHPYRQPIVSNPCGTNNGGCSHLCLIKPGGKGFTCECPDDFRTLQLSGSTYCMPMCSSTQFLCANNEKCIPIWWKCDGQKDCSDGSDELALCPQRFCRLGQFQCSDGNCTSPQTLCNAHQNCPDGSDEDRLLCENHHCDSNEWQCANKRCIPESWQCDTFNDCEDNSDEDSSHCASRTCRPGQFRCANGRCIPQAWKCDVDNDCGDHSDEPIEECMSSAHLCDNFTEFSCKTNYRCIPKWAVCNGVDDCRDNSDEQGCEERTCHPVGDFRCKNHHCIPLRWQCDGQNDCGDNSDEENCAPRECTESEFRCVNQQCIPSRWICDHYNDCGDNSDERDCEMRTCHPEYFQCTSGHCVHSELKCDGSADCLDASDEADCPTRFPDGAYCQATMFECKNHVCIPPYWKCDGDDDCGDGSDEELHLCLDVPCNSPNRFRCDNNRCIYSHEVCNGVDDCGDGTDETEEHCRKPTPKPCTEYEYKCGNGHCIPHDNVCDDADDCGDWSDELGCNKGKERTCAENICEQNCTQLNEGGFICSCTAGFETNVFDRTSCLDINECEQFGTCPQHCRNTKGSYECVCADGFTSMSDRPGKRCAAEGSSPLLLLPDNVRIRKYNLSSERFSEYLQDEEYIQAVDYDWDPKDIGLSVVYYTVRGEGSRFGAIKRAYIPNFESGRNNLVQEVDLKLKYVMQPDGIAVDWVGRHIYWSDVKNKRIEVAKLDGRYRKWLISTDLDQPAAIAVNPKLGLMFWTDWGKEPKIESAWMNGEDRNILVFEDLGWPTGLSIDYLNNDRIYWSDFKEDVIETIKYDGTDRRVIAKEAMNPYSLDIFEDQLYWISKEKGEVWKQNKFGQGKKEKTLVVNPWLTQVRIFHQLRYNKSVPNLCKQICSHLCLLRPGGYSCACPQGSSFIEGSTTECDAAIELPINLPPPCRCMHGGNCYFDETDLPKCKCPSGYTGKYCEMAFSKGISPGTTAVAVLLTILLIVVIGALAIAGFFHYRRTGSLLPALPKLPSLSSLVKPSENGNGVTFRSGADLNMDIGVSGFGPETAIDRSMAMSEDFVMEMGKQPIIFENPMYSARDSAVKVVQPIQVTVSENVDNKNYGSPINPSEIVPETNPTSPAADGTQVTKWNLFKRKSKQTTNFENPIYAQMENEQKESVAATPPPSPSLPAKPKPPSRRDPTPTYSATEDTFKDTANLVKEDSEV.

Positions 1–25 (MDRGPAAVACTLLLALVACLAPASG) are cleaved as a signal peptide. The Extracellular portion of the chain corresponds to 26 to 4423 (QECDSAHFRC…FSKGISPGTT (4398 aa)). LDL-receptor class A domains lie at 27-63 (ECDSAHFRCGSGHCIPADWRCDGTKDCSDDADEIGCA), 66-104 (TCQQGYFKCQSEGQCIPNSWVCDQDQDCDDGSDERQDCS), 107-143 (TCSSHQITCSNGQCIPSEYRCDHVRDCPDGADENDCQ), 146-180 (TCEQLTCDNGACYNTSQKCDWKVDCRDSSDEINCT), 182-218 (ICLHNEFSCGNGECIPRAYVCDHDNDCQDGSDEHACN), 221-257 (TCGGYQFTCPSGRCIYQNWVCDGEDDCKDNGDEDGCE), and 265-308 (KCSP…KYCS). 21 cysteine pairs are disulfide-bonded: C28–C40, C35–C53, C47–C62, C67–C80, C74–C93, C87–C103, C108–C120, C115–C133, C127–C142, C147–C157, C152–C170, C164–C179, C183–C195, C190–C208, C202–C217, C222–C234, C229–C247, C241–C256, C266–C279, C273–C292, and C286–C307. Residues N159 and N178 are each glycosylated (N-linked (GlcNAc...) asparagine). N-linked (GlcNAc...) asparagine glycans are attached at residues N299, N300, N341, N388, and N463. LDL-receptor class B repeat units lie at residues 436-478 (QRVF…DWVN), 479-521 (NKIY…DPTV), 522-568 (GYLF…DMIS), 569-613 (KRVY…FEGQ), 753-795 (STIF…DWIS), 796-837 (KNLY…HPFA), 838-881 (GYLF…DWAA), and 882-925 (SRLY…FGEH). A glycan (N-linked (GlcNAc...) asparagine) is linked at N866. In terms of domain architecture, LDL-receptor class A 8 spans 1025–1061 (QCGLFSFPCKNGRCVPNYYLCDGVDDCHDNSDEQLCG). Disulfide bonds link C1026-C1038, C1033-C1051, and C1045-C1060. The N-linked (GlcNAc...) asparagine glycan is linked to N1064. LDL-receptor class A domains are found at residues 1066–1102 (TCSSSAFTCGHGECIPAHWRCDKRNDCVDGSDEHNCP), 1108–1144 (SCLDTQYTCDNHQCISKNWVCDTDNDCGDGSDEKNCN), 1148–1184 (TCQPSQFNCPNHRCIDLSFVCDGDKDCVDGSDEVGCV), 1186–1223 (NCTASQFKCASGDKCIGVTNRCDGVFDCSDNSDEAGCP), 1229–1267 (MCHSDEFQCQEDGICIPNFWECDGHPDCLYGSDEHNACV), 1270–1306 (TCPSSYFHCDNGNCIHRAWLCDRDNDCGDMSDEKDCP), and 1304–1349 (DCPT…PLCN). Cystine bridges form between C1067-C1079, C1074-C1092, C1086-C1101, C1109-C1121, C1116-C1134, and C1128-C1143. Ca(2+) is bound by residues W1126, D1129, D1131, D1133, D1139, and E1140. An N-linked (GlcNAc...) asparagine glycan is attached at N1144. Cystine bridges form between C1149–C1161, C1156–C1174, and C1168–C1183. N1186 is a glycosylation site (N-linked (GlcNAc...) asparagine). 12 cysteine pairs are disulfide-bonded: C1187-C1200, C1194-C1213, C1207-C1222, C1230-C1243, C1237-C1256, C1250-C1266, C1271-C1283, C1278-C1296, C1290-C1305, C1305-C1325, C1312-C1338, and C1332-C1348. D1208, V1210, D1212, D1218, and E1219 together coordinate Ca(2+). Residues N1327, N1340, and N1383 are each glycosylated (N-linked (GlcNAc...) asparagine). The EGF-like 1; calcium-binding domain occupies 1390-1429 (DIDECDILGSCSQHCYNMRGSFRCSCDTGYMLESDGRTCK). 3 disulfides stabilise this stretch: C1394/C1404, C1400/C1413, and C1415/C1428. Residues N1464, N1496, and N1550 are each glycosylated (N-linked (GlcNAc...) asparagine). 5 LDL-receptor class B repeats span residues 1478-1520 (GRIF…DWVG), 1521-1563 (RNLY…DPRM), 1566-1609 (HLLF…DYPN), 1610-1654 (RLLY…FEDS), and 1655-1695 (VYWT…VHPS). N1675 carries N-linked (GlcNAc...) asparagine glycosylation. The 42-residue stretch at 1700–1741 (SVNPCAFSRCSHLCLLSSQGPHFYSCVCPSGWSLSPDLLNCL) folds into the EGF-like 2 domain. Disulfide bonds link C1704–C1713, C1709–C1725, and C1727–C1740. 5 LDL-receptor class B repeats span residues 1790–1832 (QYIY…DWIS), 1833–1882 (RNLY…DPAR), 1883–1930 (GKLY…DIEE), 1931–1972 (QKLY…HDSF), and 1973–2013 (LYYT…YHRR). An N-linked (GlcNAc...) asparagine glycan is attached at N1810. Residue N2055 is glycosylated (N-linked (GlcNAc...) asparagine). LDL-receptor class B repeat units lie at residues 2107 to 2156 (GFIY…DWVA), 2157 to 2201 (GNLY…DPKN), 2202 to 2245 (RYLF…DRSD), 2246 to 2289 (GYVY…FENS), 2431 to 2477 (DRIY…DWIT), 2478 to 2518 (RRIY…DPCQ), 2519 to 2562 (GYLY…DYEE), 2563 to 2604 (DLLY…YGQY), and 2605 to 2646 (IYWT…VVKN). N-linked (GlcNAc...) asparagine glycans are attached at residues N2177 and N2224. N2499 and N2547 each carry an N-linked (GlcNAc...) asparagine glycan. 10 LDL-receptor class A domains span residues 2699–2737 (RCGASSFTCSNGRCISEEWKCDNDNDCGDGSDEMESVCA), 2740–2776 (TCSPTAFTCANGRCVQYSYRCDYYNDCGDGSDEAGCL), 2779–2818 (DCNATTEFMCNNRRCIPREFICNGVDNCHDNNTSDEKNCP), 2821–2860 (TCQSGYTKCHNSNICIPRVYLCDGDNDCGDNSDENPTYCT), 2863–2900 (TCSSSEFQCASGRCIPQHWYCDQETDCFDASDEPASCG), 2905–2944 (TCLADEFKCDGGRCIPSEWICDGDNDCGDMSDEDKRHQCQ), 2947–2989 (NCSD…QNCT), 2992–3028 (TCSENEFTCGYGLCIPKIFRCDRHNDCGDYSDERGCL), 3031–3069 (TCQQNQFTCQNGRCISKTFVCDEDNDCGDGSDELMHLCH), and 3074–3110 (TCPPHEFKCDNGRCIEMMKLCNHLDDCLDNSDEKGCG). Cystine bridges form between C2700-C2712, C2707-C2725, C2719-C2736, C2741-C2753, C2748-C2766, C2760-C2775, C2780-C2793, C2788-C2806, C2800-C2817, C2822-C2835, C2829-C2848, C2842-C2859, C2864-C2876, C2871-C2889, C2883-C2899, C2906-C2918, C2913-C2931, and C2925-C2943. N2781 carries an N-linked (GlcNAc...) asparagine glycan. 2 N-linked (GlcNAc...) asparagine glycosylation sites follow: N2809 and N2810. Residue N2947 is glycosylated (N-linked (GlcNAc...) asparagine). Disulfide bonds link C2948–C2965, C2955–C2978, C2972–C2988, C2993–C3005, C3000–C3018, C3012–C3027, C3032–C3044, C3039–C3057, C3051–C3068, C3075–C3087, C3082–C3100, C3094–C3109, C3114–C3126, C3122–C3135, C3137–C3150, C3156–C3167, C3163–C3176, and C3178–C3191. An N-linked (GlcNAc...) asparagine glycan is attached at N2987. Residues 3110 to 3151 (GINECHDPSISGCDHNCTDTLTSFYCSCRPGYKLMSDKRTCV) form the EGF-like 3 domain. N-linked (GlcNAc...) asparagine glycosylation is present at N3125. One can recognise an EGF-like 4; calcium-binding domain in the interval 3152-3192 (DIDECTEMPFVCSQKCENVIGSYICKCAPGYLREPDGKTCR). Residues N3211, N3257, N3315, and N3355 are each glycosylated (N-linked (GlcNAc...) asparagine). LDL-receptor class B repeat units follow at residues 3239-3281 (KRLY…DWVS), 3282-3324 (RKLY…DNPR), 3333-3376 (GYLY…DYTN), 3377-3419 (DLLY…FEDT), and 3420-3460 (IYWT…YHPY). An N-linked (GlcNAc...) asparagine glycan is attached at N3446. 11 LDL-receptor class A domains span residues 3511–3549 (MCSSTQFLCANNEKCIPIWWKCDGQKDCSDGSDELALCP), 3552–3590 (FCRLGQFQCSDGNCTSPQTLCNAHQNCPDGSDEDRLLCE), 3593–3631 (HCDSNEWQCANKRCIPESWQCDTFNDCEDNSDEDSSHCA), 3634–3672 (TCRPGQFRCANGRCIPQAWKCDVDNDCGDHSDEPIEECM), 3677–3715 (LCDNFTEFSCKTNYRCIPKWAVCNGVDDCRDNSDEQGCE), 3718–3755 (TCHPVGDFRCKNHHCIPLRWQCDGQNDCGDNSDEENCA), 3758–3794 (ECTESEFRCVNQQCIPSRWICDHYNDCGDNSDERDCE), 3797–3833 (TCHPEYFQCTSGHCVHSELKCDGSADCLDASDEADCP), 3841–3879 (YCQATMFECKNHVCIPPYWKCDGDDDCGDGSDEELHLCL), 3882–3921 (PCNSPNRFRCDNNRCIYSHEVCNGVDDCGDGTDETEEHCR), and 3927–3963 (PCTEYEYKCGNGHCIPHDNVCDDADDCGDWSDELGCN). Intrachain disulfides connect C3512–C3525, C3519–C3538, C3532–C3548, C3553–C3565, C3560–C3578, C3572–C3589, C3594–C3606, C3601–C3619, C3613–C3630, C3635–C3647, C3642–C3660, C3654–C3671, C3678–C3692, C3686–C3705, C3699–C3714, C3719–C3732, C3727–C3745, C3739–C3754, C3759–C3771, C3766–C3784, C3778–C3793, C3798–C3810, C3805–C3823, C3817–C3832, C3842–C3854, C3849–C3867, C3861–C3878, C3883–C3896, C3891–C3909, C3903–C3920, C3928–C3940, C3935–C3953, and C3947–C3962. The N-linked (GlcNAc...) asparagine glycan is linked to N3564. The N-linked (GlcNAc...) asparagine glycan is linked to N3680. N-linked (GlcNAc...) asparagine glycosylation is present at N3978. In terms of domain architecture, EGF-like 5; calcium-binding spans 4007-4048 (DINECEQFGTCPQHCRNTKGSYECVCADGFTSMSDRPGKRCA). 3 disulfide bridges follow: C4011-C4021, C4017-C4030, and C4032-C4047. Residue N4068 is glycosylated (N-linked (GlcNAc...) asparagine). LDL-receptor class B repeat units lie at residues 4154-4196 (RHIY…NPKL), 4197-4240 (GLMF…DYLN), and 4242-4283 (DRIY…FEDQ). Residue N4327 is glycosylated (N-linked (GlcNAc...) asparagine). An EGF-like 6 domain is found at 4377–4411 (LPPPCRCMHGGNCYFDETDLPKCKCPSGYTGKYCE). Cystine bridges form between C4381-C4389, C4383-C4399, and C4401-C4410. Residues 4424–4446 (AVAVLLTILLIVVIGALAIAGFF) form a helical membrane-spanning segment. Over 4447-4655 (HYRRTGSLLP…ANLVKEDSEV (209 aa)) the chain is Cytoplasmic. The SH3-binding signature appears at 4453-4462 (SLLPALPKLP). The short motif at 4456 to 4461 (PALPKL) is the PxLPxI/L motif 1; mediates interaction with ANKRA2 element. Positions 4459-4464 (PKLPSL) match the PxLPxI/L motif 2; mediates interaction with ANKRA2 motif. Residues S4463 and S4466 each carry the phosphoserine modification. The Endocytosis signal signature appears at 4521-4526 (FENPMY). A disordered region spans residues 4550–4574 (KNYGSPINPSEIVPETNPTSPAADG). Positions 4565 to 4574 (TNPTSPAADG) are enriched in polar residues. A Phosphoserine modification is found at S4569. The interval 4589–4602 (QTTNFENPIYAQME) is interaction with DAB2. The NPXY motif motif lies at 4595–4598 (NPIY). An SH2-binding motif is present at residues 4598–4601 (YAQM). A disordered region spans residues 4601-4655 (MENEQKESVAATPPPSPSLPAKPKPPSRRDPTPTYSATEDTFKDTANLVKEDSEV). The short motif at 4611–4622 (ATPPPSPSLPAK) is the SH3-binding element. Residues 4612–4624 (TPPPSPSLPAKPK) show a composition bias toward pro residues. Residue S4616 is modified to Phosphoserine. T4632 is subject to Phosphothreonine. At S4653 the chain carries Phosphoserine.

Belongs to the LDLR family. Binds plasminogen, extracellular matrix components, plasminogen activator-plasminogen activator inhibitor type I complex, apolipoprotein E-enriched beta-VLDL, lipoprotein lipase, lactoferrin, CLU/clusterin and calcium. Forms a multimeric complex together with LRPAP1. Interacts (via PxLPxI/L motif) with ANKRA2 (via ankyrin repeats). Interacts with LRP2BP. Interacts (via NPXY motif) with DAB2; the interaction is not affected by tyrosine phosphorylation of the NPXY motif. Interacts with MB. Interacts with BMP4. Interacts with the Sonic hedgehog protein N-product which is the active product of SHH. Interacts with CST3 in a calcium-dependent manner. Interacts with the vitamin-D binding protein GC/DBP. Interacts with sex hormone-binding protein SHBG. Interacts with angiotensin-2. Also interacts with angiotensin 1-7. Interacts with APOM. Interacts with selenoprotein SEPP1. Interacts with LEP. Interacts with ALB. Interacts with the antiapoptotic protein BIRC5/survivin. Interacts with matrix metalloproteinase MMP2 in complex with metalloproteinase inhibitor TIMP1. In neurons, forms a trimeric complex with APP and APPB1/FE65. Interacts with LDLRAP1/ARH; mediates trafficking of LRP2 to the endocytic recycling compartment. Does not interact with beta-amyloid protein 40 alone but interacts with the complex composed of beta-amyloid protein 40 and CLU/APOJ. Interacts with MDK. In terms of processing, a fraction undergoes proteolytic cleavage of the extracellular domain at the cell membrane to generate a cytoplasmic tail fragment. This is internalized into the early endosome from where it trafficks in an LDLRAP1/ARH-dependent manner to the endocytic recycling compartment (ERC). In the ERC, it is further cleaved by gamma-secretase to release a fragment which translocates to the nucleus and mediates transcriptional repression. N-glycosylation is required for ligand binding. In terms of tissue distribution, expressed in first and third trimester cytotrophoblasts in the placenta (at protein level). Absorptive epithelia, including renal proximal tubules.

It is found in the apical cell membrane. It localises to the endosome lumen. The protein localises to the membrane. Its subcellular location is the coated pit. The protein resides in the cell projection. It is found in the dendrite. It localises to the axon. Multiligand endocytic receptor. Acts together with CUBN to mediate endocytosis of high-density lipoproteins. Mediates receptor-mediated uptake of polybasic drugs such as aprotinin, aminoglycosides and polymyxin B. In the kidney, mediates the tubular uptake and clearance of leptin. Also mediates transport of leptin across the blood-brain barrier through endocytosis at the choroid plexus epithelium. Endocytosis of leptin in neuronal cells is required for hypothalamic leptin signaling and leptin-mediated regulation of feeding and body weight. Mediates endocytosis and subsequent lysosomal degradation of CST3 in kidney proximal tubule cells. Mediates renal uptake of 25-hydroxyvitamin D3 in complex with the vitamin D3 transporter GC/DBP. Mediates renal uptake of metallothionein-bound heavy metals. Together with CUBN, mediates renal reabsorption of myoglobin. Mediates renal uptake and subsequent lysosomal degradation of APOM. Plays a role in kidney selenium homeostasis by mediating renal endocytosis of selenoprotein SEPP1. Mediates renal uptake of the antiapoptotic protein BIRC5/survivin which may be important for functional integrity of the kidney. Mediates renal uptake of matrix metalloproteinase MMP2 in complex with metalloproteinase inhibitor TIMP1. Mediates endocytosis of Sonic hedgehog protein N-product (ShhN), the active product of SHH. Also mediates ShhN transcytosis. In the embryonic neuroepithelium, mediates endocytic uptake and degradation of BMP4, is required for correct SHH localization in the ventral neural tube and plays a role in patterning of the ventral telencephalon. Required at the onset of neurulation to sequester SHH on the apical surface of neuroepithelial cells of the rostral diencephalon ventral midline and to control PTCH1-dependent uptake and intracellular trafficking of SHH. During neurulation, required in neuroepithelial cells for uptake of folate bound to the folate receptor FOLR1 which is necessary for neural tube closure. In the adult brain, negatively regulates BMP signaling in the subependymal zone which enables neurogenesis to proceed. In astrocytes, mediates endocytosis of ALB which is required for the synthesis of the neurotrophic factor oleic acid. Involved in neurite branching. During optic nerve development, required for SHH-mediated migration and proliferation of oligodendrocyte precursor cells. Mediates endocytic uptake and clearance of SHH in the retinal margin which protects retinal progenitor cells from mitogenic stimuli and keeps them quiescent. Plays a role in reproductive organ development by mediating uptake in reproductive tissues of androgen and estrogen bound to the sex hormone binding protein SHBG. Mediates endocytosis of angiotensin-2. Also mediates endocytosis of angiotensis 1-7. Binds to the complex composed of beta-amyloid protein 40 and CLU/APOJ and mediates its endocytosis and lysosomal degradation. Required for embryonic heart development. Required for normal hearing, possibly through interaction with estrogen in the inner ear. In Homo sapiens (Human), this protein is Low-density lipoprotein receptor-related protein 2.